Here is a 225-residue protein sequence, read N- to C-terminus: Small ribosomal subunit protein uS3 (225 aa).

The KH type-2 domain maps to 38-106; it reads LRAFLRRKLS…DVALNIVEIR (69 aa).

The protein belongs to the universal ribosomal protein uS3 family. Part of the 30S ribosomal subunit. Forms a tight complex with proteins S10 and S14.

Its function is as follows. Binds the lower part of the 30S subunit head. Binds mRNA in the 70S ribosome, positioning it for translation. This Gluconobacter oxydans (strain 621H) (Gluconobacter suboxydans) protein is Small ribosomal subunit protein uS3.